The chain runs to 785 residues: Hypha-specific G1 cyclin-related protein 1 (785 aa).

The tract at residues 1 to 42 (MINITKPLTPKSISQQKQQQQHPYKNISTTKSNNNPQASGSK) is disordered. Over residues 22–42 (HPYKNISTTKSNNNPQASGSK) the composition is skewed to polar residues. In terms of domain architecture, Cyclin N-terminal spans 71–238 (DIYDIMVNLI…VLNTLEWSLN (168 aa)). 3 disordered regions span residues 408-433 (TTTT…TTPV), 447-679 (VSST…SKFN), and 750-774 (NNSG…DSPI). 2 stretches are compositionally biased toward low complexity: residues 447–473 (VSST…STTP) and 484–512 (NYSN…NNTT). The segment covering 513–535 (ISPVDSTTINSHTKNSSQLNYQY) has biased composition (polar residues). Residues 579–613 (NSANKNSNKSNSANNNNTTTIATTTTTTTNNNNNS) show a composition bias toward low complexity. Residues 621–631 (LSYNNYFNSPN) are compositionally biased toward polar residues. Low complexity predominate over residues 646-679 (QQQQQNQGQNQQQPLQLYQGDNNNNGTNTNSKFN). Gly residues predominate over residues 754–764 (NGKGNGNGGSG). Positions 765 to 774 (TPISENDSPI) are enriched in polar residues.

It belongs to the cyclin family. Interacts with CDC28.

Functionally, hypha-specific G1 cyclin-related protein involved in regulation of morphogenesis and opaque cells filamentous growth, and required for both conventional and pheromone-stimulated biofilm formation. Required to maintain hyphal tip localization of actin and SPA2. Regulates the CDC28 kinase during hyphal growth. The CDC28-HGC1 complex phosphorylates and prevents RGA2 from localizing to hyphal tips, leading to localized CDC42 activation for hyphal extension. The CDC28-HGC1 complex also phosphorylates SEC2 and maintains CDC11 phosphorylation throughout hyphal growth. Moreover CDC28-HGC1 phosphorylation of EFG1 represses cell separation genes during hyphal growth. Also partially controls SEP7 phosphorylation status and subsequent septin ring dynamics. Required for virulence and especially mediates dynamic adhesion to endothelium of blood vessels during circulation. The polypeptide is Hypha-specific G1 cyclin-related protein 1 (HGC1) (Candida albicans (strain SC5314 / ATCC MYA-2876) (Yeast)).